We begin with the raw amino-acid sequence, 285 residues long: 4-hydroxybenzoate octaprenyltransferase (285 aa).

A run of 7 helical transmembrane segments spans residues P17–G37, P41–I61, L92–L112, H135–A155, G158–Y178, A216–L236, and A263–L283.

It belongs to the UbiA prenyltransferase family. Mg(2+) serves as cofactor.

It localises to the cell inner membrane. The catalysed reaction is all-trans-octaprenyl diphosphate + 4-hydroxybenzoate = 4-hydroxy-3-(all-trans-octaprenyl)benzoate + diphosphate. The protein operates within cofactor biosynthesis; ubiquinone biosynthesis. Catalyzes the prenylation of para-hydroxybenzoate (PHB) with an all-trans polyprenyl group. Mediates the second step in the final reaction sequence of ubiquinone-8 (UQ-8) biosynthesis, which is the condensation of the polyisoprenoid side chain with PHB, generating the first membrane-bound Q intermediate 3-octaprenyl-4-hydroxybenzoate. In Nitrosococcus oceani (strain ATCC 19707 / BCRC 17464 / JCM 30415 / NCIMB 11848 / C-107), this protein is 4-hydroxybenzoate octaprenyltransferase.